Here is a 144-residue protein sequence, read N- to C-terminus: Large ribosomal subunit protein uL16 (144 aa).

The span at 1–19 shows a compositional bias: basic residues; sequence MLLPKRVKYRRQHRPKTTG. The disordered stretch occupies residues 1–23; the sequence is MLLPKRVKYRRQHRPKTTGRSKG.

This sequence belongs to the universal ribosomal protein uL16 family. Part of the 50S ribosomal subunit.

Its function is as follows. Binds 23S rRNA and is also seen to make contacts with the A and possibly P site tRNAs. The polypeptide is Large ribosomal subunit protein uL16 (Staphylococcus epidermidis (strain ATCC 35984 / DSM 28319 / BCRC 17069 / CCUG 31568 / BM 3577 / RP62A)).